We begin with the raw amino-acid sequence, 122 residues long: UPF0102 protein CPE1705 (122 aa).

This sequence belongs to the UPF0102 family.

In Clostridium perfringens (strain 13 / Type A), this protein is UPF0102 protein CPE1705.